A 491-amino-acid polypeptide reads, in one-letter code: UDP-N-acetylmuramate--L-alanine ligase (491 aa).

126-132 is a binding site for ATP; the sequence is GTHGKTT.

This sequence belongs to the MurCDEF family.

The protein localises to the cytoplasm. The enzyme catalyses UDP-N-acetyl-alpha-D-muramate + L-alanine + ATP = UDP-N-acetyl-alpha-D-muramoyl-L-alanine + ADP + phosphate + H(+). It participates in cell wall biogenesis; peptidoglycan biosynthesis. Its function is as follows. Cell wall formation. In Salmonella gallinarum (strain 287/91 / NCTC 13346), this protein is UDP-N-acetylmuramate--L-alanine ligase.